Reading from the N-terminus, the 763-residue chain is Actin filament-associated protein 1-like 1 (763 aa).

Residues Leu83–Lys137 are disordered. Residues Ser98, Ser104, and Ser153 each carry the phosphoserine modification. Residues Thr169–Ser210 form a disordered region. Polar residues predominate over residues Leu175–Met185. Residues Asp220–Lys316 form the PH 1 domain. 2 positions are modified to phosphoserine: Ser329 and Ser343. Positions Ser343–Gly380 are disordered. One can recognise a PH 2 domain in the interval Glu413–Gly507. Tyr552 is modified (phosphotyrosine). The segment at Gln561–Lys604 is disordered. A compositionally biased stretch (basic and acidic residues) spans Glu582–Val591. Residues Gly606 to Gln694 are a coiled coil. Over residues Ser712–Pro724 the composition is skewed to polar residues. Positions Ser712–Thr763 are disordered. Ser742 carries the post-translational modification Phosphoserine. The span at Lys754–Thr763 shows a compositional bias: basic and acidic residues.

Interacts with CTTN.

It is found in the cytoplasm. It localises to the cell projection. The protein resides in the podosome. The protein localises to the invadopodium. Its subcellular location is the cytoskeleton. It is found in the stress fiber. May be involved in podosome and invadosome formation. This Bos taurus (Bovine) protein is Actin filament-associated protein 1-like 1 (AFAP1L1).